The chain runs to 62 residues: Protein YmcF (62 aa).

It belongs to the YmcF/YnqF peptide family.

The chain is Protein YmcF from Escherichia coli (strain K12).